The sequence spans 92 residues: MKCGVLFMISCLLITFLVLSHVREVESKTKWGCDMNRPFPGKCGTNGKDTCISDIKKMPGAPKDLVVRCECSQRFVWKGYPPERLCKCQYDC.

The first 27 residues, 1 to 27 (MKCGVLFMISCLLITFLVLSHVREVES), serve as a signal peptide directing secretion. Cystine bridges form between cysteine 33–cysteine 92, cysteine 43–cysteine 71, cysteine 51–cysteine 86, and cysteine 69–cysteine 88.

The protein belongs to the DEFL family.

The protein localises to the secreted. In Arabidopsis thaliana (Mouse-ear cress), this protein is Defensin-like protein 226 (SCRL2).